We begin with the raw amino-acid sequence, 531 residues long: Cation transporter HKT1;3 (531 aa).

Residues 1–46 (MNHCLVVSHKKLQTFRTFAASKFSSFTKSAQKSIKYSFQFIYQNNP) are Cytoplasmic-facing. 2 consecutive transmembrane segments (helical) span residues 47–67 (LFVHVAYFALISFAGYGSLKV) and 108–128 (LWVLTILMLIGGEVFTSMLGI). Residues 129 to 190 (HFMRAEFGTK…GGHVEPKTIK (62 aa)) are Cytoplasmic-facing. Transmembrane regions (helical) follow at residues 191–211 (FLGFVVMGYLLITNLGGSLLI) and 264–284 (ILLLLILPQILAGNTLFAPCL). Over 285–321 (RLMVWSLEKITGKKDCRYILEYPKAIGYKHLMSTRES) the chain is Cytoplasmic. 2 helical membrane-spanning segments follow: residues 322-342 (VYLTLTVVSLIILQTVLFLSL) and 383-403 (SAILVLYTIMMYLPGYTSFLP). The Cytoplasmic portion of the chain corresponds to 404–421 (RHDGEDSKTEKINKRKGL). The next 2 membrane-spanning stretches (helical) occupy residues 422–442 (LENWIFSHMSYLAIFVMLICI) and 494–514 (YGFAGKWSDNGKAILIIVMLF). The Cytoplasmic portion of the chain corresponds to 515-530 (GRLKTFNMKGGRAWKL).

This sequence belongs to the TrkH potassium transport family. HKT (TC 2.A.38.3) subfamily. In terms of assembly, interacts with CNIH1. In terms of tissue distribution, weakly expressed. In roots, expressed in epidermis, exodermis, cortex, and sieve elements and companion cells of phloem. In mature leaves, expressed in large highly vacuolated cells of the adaxial epidermis, phloem and xylem.

The protein resides in the endoplasmic reticulum membrane. The protein localises to the golgi apparatus membrane. The enzyme catalyses Na(+)(in) = Na(+)(out). Functions as a highly-selective sodium transporter. Does not seem to function as sodium-potassium cotransporter. May be involved in turgor changes for rolling and unrolling of leaves in response to environmental variations. This is Cation transporter HKT1;3 from Oryza sativa subsp. japonica (Rice).